Here is a 345-residue protein sequence, read N- to C-terminus: Phosphoribosylformylglycinamidine cyclo-ligase (345 aa).

Belongs to the AIR synthase family.

Its subcellular location is the cytoplasm. It catalyses the reaction 2-formamido-N(1)-(5-O-phospho-beta-D-ribosyl)acetamidine + ATP = 5-amino-1-(5-phospho-beta-D-ribosyl)imidazole + ADP + phosphate + H(+). Its pathway is purine metabolism; IMP biosynthesis via de novo pathway; 5-amino-1-(5-phospho-D-ribosyl)imidazole from N(2)-formyl-N(1)-(5-phospho-D-ribosyl)glycinamide: step 2/2. The polypeptide is Phosphoribosylformylglycinamidine cyclo-ligase (Pasteurella multocida (strain Pm70)).